Consider the following 417-residue polypeptide: NADH-quinone oxidoreductase subunit D (417 aa).

It belongs to the complex I 49 kDa subunit family. In terms of assembly, NDH-1 is composed of 14 different subunits. Subunits NuoB, C, D, E, F, and G constitute the peripheral sector of the complex.

It is found in the cell inner membrane. It catalyses the reaction a quinone + NADH + 5 H(+)(in) = a quinol + NAD(+) + 4 H(+)(out). In terms of biological role, NDH-1 shuttles electrons from NADH, via FMN and iron-sulfur (Fe-S) centers, to quinones in the respiratory chain. The immediate electron acceptor for the enzyme in this species is believed to be ubiquinone. Couples the redox reaction to proton translocation (for every two electrons transferred, four hydrogen ions are translocated across the cytoplasmic membrane), and thus conserves the redox energy in a proton gradient. The sequence is that of NADH-quinone oxidoreductase subunit D from Azoarcus sp. (strain BH72).